A 330-amino-acid polypeptide reads, in one-letter code: Flotillin-like protein FloA (330 aa).

2 helical membrane passes run 5–25 and 27–47; these read FLPL…FYYV and FLLW…QLFL.

Belongs to the flotillin-like FloA family. In terms of assembly, homooligomerizes.

It localises to the cell membrane. The protein localises to the membrane raft. Found in functional membrane microdomains (FMM) that may be equivalent to eukaryotic membrane rafts. FMMs are highly dynamic and increase in number as cells age. Flotillins are thought to be important factors in membrane fluidity. In Parabacteroides distasonis (strain ATCC 8503 / DSM 20701 / CIP 104284 / JCM 5825 / NCTC 11152), this protein is Flotillin-like protein FloA.